Here is a 103-residue protein sequence, read N- to C-terminus: Large ribosomal subunit protein bL21 (103 aa).

This sequence belongs to the bacterial ribosomal protein bL21 family. In terms of assembly, part of the 50S ribosomal subunit. Contacts protein L20.

In terms of biological role, this protein binds to 23S rRNA in the presence of protein L20. This Azotobacter vinelandii (strain DJ / ATCC BAA-1303) protein is Large ribosomal subunit protein bL21.